A 495-amino-acid polypeptide reads, in one-letter code: L-2,4-diaminobutyrate decarboxylase (495 aa).

Position 312 is an N6-(pyridoxal phosphate)lysine (Lys312).

This sequence belongs to the group II decarboxylase family. Requires pyridoxal 5'-phosphate as cofactor.

The catalysed reaction is L-2,4-diaminobutanoate + H(+) = propane-1,3-diamine + CO2. The protein operates within siderophore biosynthesis; rhizobactin biosynthesis. This chain is L-2,4-diaminobutyrate decarboxylase (rhbB), found in Rhizobium meliloti (strain 1021) (Ensifer meliloti).